The chain runs to 478 residues: 3-isopropylmalate dehydratase large subunit (478 aa).

Residues Cys-347, Cys-407, and Cys-410 each coordinate [4Fe-4S] cluster.

It belongs to the aconitase/IPM isomerase family. LeuC type 1 subfamily. In terms of assembly, heterodimer of LeuC and LeuD. [4Fe-4S] cluster serves as cofactor.

The enzyme catalyses (2R,3S)-3-isopropylmalate = (2S)-2-isopropylmalate. The protein operates within amino-acid biosynthesis; L-leucine biosynthesis; L-leucine from 3-methyl-2-oxobutanoate: step 2/4. Catalyzes the isomerization between 2-isopropylmalate and 3-isopropylmalate, via the formation of 2-isopropylmaleate. In Prochlorococcus marinus (strain MIT 9303), this protein is 3-isopropylmalate dehydratase large subunit.